The sequence spans 1343 residues: DNA-directed RNA polymerase subunit beta (1343 aa).

This sequence belongs to the RNA polymerase beta chain family. The RNAP catalytic core consists of 2 alpha, 1 beta, 1 beta' and 1 omega subunit. When a sigma factor is associated with the core the holoenzyme is formed, which can initiate transcription.

It carries out the reaction RNA(n) + a ribonucleoside 5'-triphosphate = RNA(n+1) + diphosphate. DNA-dependent RNA polymerase catalyzes the transcription of DNA into RNA using the four ribonucleoside triphosphates as substrates. This is DNA-directed RNA polymerase subunit beta from Shewanella baltica (strain OS155 / ATCC BAA-1091).